A 126-amino-acid polypeptide reads, in one-letter code: uncharacterized protein (126 aa).

The interval 1–101 (MQASSEPANV…KSVGSQSADE (101 aa)) is disordered. Polar residues-rich tracts occupy residues 14 to 27 (GQNQ…STSP) and 86 to 99 (DTEA…SQSA).

This is an uncharacterized protein from Schizosaccharomyces pombe (strain 972 / ATCC 24843) (Fission yeast).